The chain runs to 448 residues: Ribulose bisphosphate carboxylase large chain (448 aa).

K4 is modified (N6,N6,N6-trimethyllysine). Residues N113 and T163 each coordinate substrate. K165 serves as the catalytic Proton acceptor. K167 is a binding site for substrate. The Mg(2+) site is built by K191, D193, and E194. An N6-carboxylysine modification is found at K191. Residue H284 is the Proton acceptor of the active site. Residues R285, H317, and S369 each coordinate substrate.

It belongs to the RuBisCO large chain family. Type I subfamily. As to quaternary structure, heterohexadecamer of 8 large chains and 8 small chains; disulfide-linked. The disulfide link is formed within the large subunit homodimers. Requires Mg(2+) as cofactor. In terms of processing, the disulfide bond which can form in the large chain dimeric partners within the hexadecamer appears to be associated with oxidative stress and protein turnover.

The protein localises to the plastid. It localises to the chloroplast. It carries out the reaction 2 (2R)-3-phosphoglycerate + 2 H(+) = D-ribulose 1,5-bisphosphate + CO2 + H2O. It catalyses the reaction D-ribulose 1,5-bisphosphate + O2 = 2-phosphoglycolate + (2R)-3-phosphoglycerate + 2 H(+). In terms of biological role, ruBisCO catalyzes two reactions: the carboxylation of D-ribulose 1,5-bisphosphate, the primary event in carbon dioxide fixation, as well as the oxidative fragmentation of the pentose substrate in the photorespiration process. Both reactions occur simultaneously and in competition at the same active site. This is Ribulose bisphosphate carboxylase large chain from Eucryphia lucida (Leatherwood).